The following is a 175-amino-acid chain: Alkyl hydroperoxide reductase AhpD (175 aa).

The active-site Proton donor is the cysteine 131. Cysteine 131 and cysteine 134 form a disulfide bridge. Cysteine 134 serves as the catalytic Cysteine sulfenic acid (-SOH) intermediate.

The protein belongs to the AhpD family.

It carries out the reaction N(6)-[(R)-dihydrolipoyl]-L-lysyl-[lipoyl-carrier protein] + a hydroperoxide = N(6)-[(R)-lipoyl]-L-lysyl-[lipoyl-carrier protein] + an alcohol + H2O. Its function is as follows. Antioxidant protein with alkyl hydroperoxidase activity. Required for the reduction of the AhpC active site cysteine residues and for the regeneration of the AhpC enzyme activity. This chain is Alkyl hydroperoxide reductase AhpD, found in Brucella abortus (strain 2308).